The primary structure comprises 613 residues: MSLAALGVVFGDIGTSPLYAIRECFHGEFSIPVNTPNVLGVLSLLIWALLLIVTLKYLTFIMKADNEGEGGILALTALIISHSKKNKSERWILVSLGLFGAALLYGDGMITPSISVLSAVEGIQIIAPSFGPLVIPVTIAILAGLFLFQHHGTAKVGSFFGPIILLWFTSIGLCGLVEIVKYPAILKAVFPWYGLEFLVNNHAKGFLVLGAVFLAVTGAEALYADMGHFGRRPIRLTWSLLVLPALLLNYFGQGAVLLSEPAKSWNPFYALVPSWGIIPMVILATLATIIASQALITGIFSLTQQGIQLGYIPRLTVQHTSASHIGQIYVPAANWALMFSTIALVAGFGSSSKLASAYGVAVTATMLISAVLFYYVARDLWNWNRLGLNLLMGMFMLIDLSFFGASVSKLFHGAWFPLVIGFALFTLMLTWKQGRLLLMKQIQDRTLTVSEFTESLAIQQPQRVKGQAIYLTANPDVVPMALLHNMRHNKILHSEVGLLHFSTERVPRVPNSKKVEVIQLNYGMYKIIARYGFMEYPNIRQVLALANQQGMHFRTDAISYFINREKIVTGMKSKMSVWRKKLFALMARNALSATAYYDLPSGQVIEIGVQVQI.

The next 11 helical transmembrane spans lie at 38–58 (VLGVLSLLIWALLLIVTLKYL), 91–111 (WILVSLGLFGAALLYGDGMIT), 128–148 (PSFGPLVIPVTIAILAGLFLF), 159–179 (FFGPIILLWFTSIGLCGLVEI), 206–226 (FLVLGAVFLAVTGAEALYADM), 238–258 (WSLLVLPALLLNYFGQGAVLL), 270–290 (ALVPSWGIIPMVILATLATII), 328–348 (IYVPAANWALMFSTIALVAGF), 357–377 (AYGVAVTATMLISAVLFYYVA), 387–407 (GLNLLMGMFMLIDLSFFGASV), and 410–430 (LFHGAWFPLVIGFALFTLMLT).

The protein belongs to the HAK/KUP transporter (TC 2.A.72) family.

It is found in the cell inner membrane. It carries out the reaction K(+)(in) + H(+)(in) = K(+)(out) + H(+)(out). In terms of biological role, transport of potassium into the cell. Likely operates as a K(+):H(+) symporter. The polypeptide is Probable potassium transport system protein Kup (Chlorobaculum tepidum (strain ATCC 49652 / DSM 12025 / NBRC 103806 / TLS) (Chlorobium tepidum)).